Here is a 113-residue protein sequence, read N- to C-terminus: PTS system fructose-like EIIB component 3 (113 aa).

The 100-residue stretch at 1-100 (MAYLVAVTAC…PQRVMSAVRK (100 aa)) folds into the PTS EIIB type-2 domain. Cys10 (phosphocysteine intermediate) is an active-site residue. Cys10 bears the Phosphocysteine; by EIIA mark.

It is found in the cytoplasm. The catalysed reaction is D-fructose(out) + N(pros)-phospho-L-histidyl-[protein] = D-fructose 1-phosphate(in) + L-histidyl-[protein]. Functionally, the phosphoenolpyruvate-dependent sugar phosphotransferase system (sugar PTS), a major carbohydrate active transport system, catalyzes the phosphorylation of incoming sugar substrates concomitantly with their translocation across the cell membrane. In Escherichia coli (strain K12), this protein is PTS system fructose-like EIIB component 3 (frwD).